Reading from the N-terminus, the 127-residue chain is Fluoride-specific ion channel FluC (127 aa).

A run of 4 helical transmembrane segments spans residues 3-23 (ALLL…LLGV), 36-56 (GTFA…GGLA), 72-92 (VGAL…ALMI), and 101-121 (FAYS…GLLL). Positions 76 and 79 each coordinate Na(+).

The protein belongs to the fluoride channel Fluc/FEX (TC 1.A.43) family.

The protein resides in the cell inner membrane. The catalysed reaction is fluoride(in) = fluoride(out). With respect to regulation, na(+) is not transported, but it plays an essential structural role and its presence is essential for fluoride channel function. In terms of biological role, fluoride-specific ion channel. Important for reducing fluoride concentration in the cell, thus reducing its toxicity. This Phenylobacterium zucineum (strain HLK1) protein is Fluoride-specific ion channel FluC.